We begin with the raw amino-acid sequence, 107 residues long: UPF0060 membrane protein A1S_1909 (107 aa).

4 helical membrane passes run 2-22 (FGLF…PYLI), 28-48 (SAWL…LLTL), 56-76 (IYAA…RFVD), and 85-105 (ILGG…PQGL).

The protein belongs to the UPF0060 family.

It is found in the cell inner membrane. The sequence is that of UPF0060 membrane protein A1S_1909 from Acinetobacter baumannii (strain ATCC 17978 / DSM 105126 / CIP 53.77 / LMG 1025 / NCDC KC755 / 5377).